We begin with the raw amino-acid sequence, 429 residues long: Adenylosuccinate synthetase (429 aa).

GTP contacts are provided by residues 12-18 and 40-42; these read GDEGKGK and GHT. Asp-13 functions as the Proton acceptor in the catalytic mechanism. Mg(2+) is bound by residues Asp-13 and Gly-40. Residues 13 to 16, 38 to 41, Thr-129, Arg-143, Gln-223, Thr-238, and Arg-302 contribute to the IMP site; these read DEGK and NAGH. Catalysis depends on His-41, which acts as the Proton donor. 298 to 304 is a binding site for substrate; sequence VVTGRKR. GTP-binding positions include Arg-304, 330 to 332, and 412 to 414; these read KLD and STS.

The protein belongs to the adenylosuccinate synthetase family. In terms of assembly, homodimer. Mg(2+) is required as a cofactor.

The protein resides in the cytoplasm. The enzyme catalyses IMP + L-aspartate + GTP = N(6)-(1,2-dicarboxyethyl)-AMP + GDP + phosphate + 2 H(+). It participates in purine metabolism; AMP biosynthesis via de novo pathway; AMP from IMP: step 1/2. Its function is as follows. Plays an important role in the de novo pathway of purine nucleotide biosynthesis. Catalyzes the first committed step in the biosynthesis of AMP from IMP. The protein is Adenylosuccinate synthetase of Maricaulis maris (strain MCS10) (Caulobacter maris).